A 354-amino-acid polypeptide reads, in one-letter code: Uroporphyrinogen decarboxylase (354 aa).

Substrate-binding positions include 27 to 31 (RQAGR), aspartate 77, tyrosine 154, threonine 209, and histidine 327.

Belongs to the uroporphyrinogen decarboxylase family. As to quaternary structure, homodimer.

It is found in the cytoplasm. The catalysed reaction is uroporphyrinogen III + 4 H(+) = coproporphyrinogen III + 4 CO2. It participates in porphyrin-containing compound metabolism; protoporphyrin-IX biosynthesis; coproporphyrinogen-III from 5-aminolevulinate: step 4/4. Functionally, catalyzes the decarboxylation of four acetate groups of uroporphyrinogen-III to yield coproporphyrinogen-III. In Salmonella newport (strain SL254), this protein is Uroporphyrinogen decarboxylase.